Reading from the N-terminus, the 278-residue chain is Bifunctional protein FolD (278 aa).

Residues 165 to 167 (GRS), Ser-190, and Thr-231 each bind NADP(+).

This sequence belongs to the tetrahydrofolate dehydrogenase/cyclohydrolase family. In terms of assembly, homodimer.

The enzyme catalyses (6R)-5,10-methylene-5,6,7,8-tetrahydrofolate + NADP(+) = (6R)-5,10-methenyltetrahydrofolate + NADPH. It catalyses the reaction (6R)-5,10-methenyltetrahydrofolate + H2O = (6R)-10-formyltetrahydrofolate + H(+). The protein operates within one-carbon metabolism; tetrahydrofolate interconversion. Catalyzes the oxidation of 5,10-methylenetetrahydrofolate to 5,10-methenyltetrahydrofolate and then the hydrolysis of 5,10-methenyltetrahydrofolate to 10-formyltetrahydrofolate. The chain is Bifunctional protein FolD from Clostridium novyi (strain NT).